Reading from the N-terminus, the 213-residue chain is Pyridoxine/pyridoxamine 5'-phosphate oxidase (213 aa).

FMN is bound by residues 60-65, 75-76, lysine 82, and glutamine 104; these read RMVLMK and YS. Lysine 65 is a binding site for substrate. Tyrosine 122 and arginine 126 together coordinate substrate. FMN contacts are provided by residues 139–140 and tryptophan 184; that span reads QS. 190–192 contacts substrate; sequence RLH. Arginine 194 contributes to the FMN binding site.

This sequence belongs to the pyridoxamine 5'-phosphate oxidase family. In terms of assembly, homodimer. FMN is required as a cofactor.

It catalyses the reaction pyridoxamine 5'-phosphate + O2 + H2O = pyridoxal 5'-phosphate + H2O2 + NH4(+). It carries out the reaction pyridoxine 5'-phosphate + O2 = pyridoxal 5'-phosphate + H2O2. It participates in cofactor metabolism; pyridoxal 5'-phosphate salvage; pyridoxal 5'-phosphate from pyridoxamine 5'-phosphate: step 1/1. It functions in the pathway cofactor metabolism; pyridoxal 5'-phosphate salvage; pyridoxal 5'-phosphate from pyridoxine 5'-phosphate: step 1/1. Its function is as follows. Catalyzes the oxidation of either pyridoxine 5'-phosphate (PNP) or pyridoxamine 5'-phosphate (PMP) into pyridoxal 5'-phosphate (PLP). The sequence is that of Pyridoxine/pyridoxamine 5'-phosphate oxidase from Nitrobacter winogradskyi (strain ATCC 25391 / DSM 10237 / CIP 104748 / NCIMB 11846 / Nb-255).